Here is a 385-residue protein sequence, read N- to C-terminus: Putative nickel insertion protein (385 aa).

Belongs to the LarC family.

In Citrifermentans bemidjiense (strain ATCC BAA-1014 / DSM 16622 / JCM 12645 / Bem) (Geobacter bemidjiensis), this protein is Putative nickel insertion protein.